Consider the following 228-residue polypeptide: MLYNVSKGVVYSDTALQGQDGDREGMWVGAGGALAPNTSSLFPPEPPGASSNIIPVYCALLATVILGLLAYVAFKCWRSHKQRQQLAKARTVELGDPDRDQRRGDSNVFVDSPPSLEPCIPSQGPHPDLGCQLYLHIPQQQQEEVQRLLMMGEPAKGWQELAGHLGYQAEAVETMACDQMPAYTLLRNWAAQEGNRATLRVLEDALAAIGREDVVQVLSSPAESSSVV.

Residues 1-52 (MLYNVSKGVVYSDTALQGQDGDREGMWVGAGGALAPNTSSLFPPEPPGASSN) are Extracellular-facing. N-linked (GlcNAc...) asparagine glycans are attached at residues Asn-4 and Asn-37. A helical; Signal-anchor for type III membrane protein transmembrane segment spans residues 53 to 73 (IIPVYCALLATVILGLLAYVA). At 74-228 (FKCWRSHKQR…SSPAESSSVV (155 aa)) the chain is on the cytoplasmic side. Positions 87 to 122 (AKARTVELGDPDRDQRRGDSNVFVDSPPSLEPCIPS) are disordered. Over residues 90–105 (RTVELGDPDRDQRRGD) the composition is skewed to basic and acidic residues. The 80-residue stretch at 143-222 (EEVQRLLMMG…DVVQVLSSPA (80 aa)) folds into the Death domain.

In terms of assembly, interacts with NGFR. Interacts with NTRK1. Interacts with SORT1. Detected in lung and testis.

It is found in the cell membrane. It localises to the nucleus. Modulates NTRK1 signaling. Can activate several intracellular signaling pathways, leading to activation of JUN. Promotes apoptosis. Promotes translocation of SORT1 to the cell membrane, and thereby hinders lysosomal degradation of SOTR1 and promotes its interaction with NGFR. The chain is Death domain-containing membrane protein NRADD (Nradd) from Mus musculus (Mouse).